The sequence spans 478 residues: Alpha-1,3-mannosyl-glycoprotein 4-beta-N-acetylglucosaminyltransferase C (478 aa).

The Cytoplasmic portion of the chain corresponds to 1–23 (MFKFHQVKHIFEILDKMRCLRKR). The helical; Signal-anchor for type II membrane protein transmembrane segment at 24-44 (FTVSFLGVLVIFLLFMNLYIE) threads the bilayer. Topologically, residues 45-478 (DSYVLEGDKQ…IIRSISIWTS (434 aa)) are lumenal. 3 N-linked (GlcNAc...) asparagine glycosylation sites follow: asparagine 84, asparagine 215, and asparagine 348.

Belongs to the glycosyltransferase 54 family. The cofactor is a divalent metal cation.

It localises to the golgi apparatus membrane. The enzyme catalyses N(4)-{beta-D-GlcNAc-(1-&gt;2)-alpha-D-Man-(1-&gt;3)-[beta-D-GlcNAc-(1-&gt;2)-alpha-D-Man-(1-&gt;6)]-beta-D-Man-(1-&gt;4)-beta-D-GlcNAc-(1-&gt;4)-beta-D-GlcNAc}-L-asparaginyl-[protein] + UDP-N-acetyl-alpha-D-glucosamine = N(4)-{beta-D-GlcNAc-(1-&gt;2)-[beta-D-GlcNAc-(1-&gt;4)]-alpha-D-Man-(1-&gt;3)-[beta-D-GlcNAc-(1-&gt;2)-alpha-D-Man-(1-&gt;6)]-beta-D-Man-(1-&gt;4)-beta-D-GlcNAc-(1-&gt;4)-beta-D-GlcNAc}-L-asparaginyl-[protein] + UDP + H(+). Its pathway is protein modification; protein glycosylation. Functionally, glycosyltransferase that participates in the transfer of N-acetylglucosamine (GlcNAc) to the core mannose residues of N-linked glycans. Catalyzes the formation of the GlcNAcbeta1-4 branch on the GlcNAcbeta1-2Manalpha1-3 arm of the core structure of N-linked glycans. Essential for the production of tri- and tetra-antennary N-linked sugar chains. Does not catalyze the transfer of GlcNAc to the Manalpha1-6 arm to form GlcNAcBeta1-4Manalpha1-6 linkage ('GnT-VI' activity). This Sus scrofa (Pig) protein is Alpha-1,3-mannosyl-glycoprotein 4-beta-N-acetylglucosaminyltransferase C (MGAT4C).